A 430-amino-acid chain; its full sequence is CC-adding tRNA nucleotidyltransferase (430 aa).

Residue 33-36 coordinates CTP; sequence GCVR. Residues D46 and D48 each contribute to the Mg(2+) site. CTP-binding positions include 108–109, N113, 150–159, and R190; these read RD and DPLRIVRAYR.

Belongs to the tRNA nucleotidyltransferase/poly(A) polymerase family. The cofactor is Mg(2+).

The catalysed reaction is a tRNA precursor + 2 CTP = a tRNA with a 3' CC end + 2 diphosphate. In terms of biological role, tRNA nucleotidyltransferase involved in the synthesis of the tRNA CCA terminus. Adds the two cytidine residues to tRNA. The chain is CC-adding tRNA nucleotidyltransferase from Geobacter sulfurreducens (strain ATCC 51573 / DSM 12127 / PCA).